A 964-amino-acid polypeptide reads, in one-letter code: Vitamin B12-dependent ribonucleotide reductase (964 aa).

The interval 1–21 (MTETASGPARGSRAKGTKAKG) is disordered. Residues 12–21 (SRAKGTKAKG) show a composition bias toward basic residues. Substrate contacts are provided by residues Ser142, 158-159 (AC), Gly187, 363-367 (NPCSE), and 553-557 (PTGTI). A disulfide bridge connects residues Cys159 and Cys376. The active-site Proton acceptor is the Asn363. Cys365 acts as the Cysteine radical intermediate in catalysis. Glu367 serves as the catalytic Proton acceptor.

It belongs to the ribonucleoside diphosphate reductase class-2 family. The cofactor is adenosylcob(III)alamin.

It catalyses the reaction a 2'-deoxyribonucleoside 5'-diphosphate + [thioredoxin]-disulfide + H2O = a ribonucleoside 5'-diphosphate + [thioredoxin]-dithiol. Catalyzes the reduction of ribonucleotides to deoxyribonucleotides. May function to provide a pool of deoxyribonucleotide precursors for DNA repair during oxygen limitation and/or for immediate growth after restoration of oxygen. The chain is Vitamin B12-dependent ribonucleotide reductase (nrdJ) from Streptomyces avermitilis (strain ATCC 31267 / DSM 46492 / JCM 5070 / NBRC 14893 / NCIMB 12804 / NRRL 8165 / MA-4680).